Reading from the N-terminus, the 299-residue chain is Probable GTP 3',8-cyclase (299 aa).

A Radical SAM core domain is found at 4–229 (LHNREIKSLR…MQNRKKYLVD (226 aa)). Residue R13 participates in GTP binding. [4Fe-4S] cluster contacts are provided by C20 and C24. Residue Y26 participates in S-adenosyl-L-methionine binding. Residue C27 participates in [4Fe-4S] cluster binding. K61 is a GTP binding site. G65 contacts S-adenosyl-L-methionine. T94 contributes to the GTP binding site. S118 lines the S-adenosyl-L-methionine pocket. Position 154 (K154) interacts with GTP. Positions 245 and 248 each coordinate [4Fe-4S] cluster. 250–252 (RIR) serves as a coordination point for GTP. A [4Fe-4S] cluster-binding site is contributed by C262.

Belongs to the radical SAM superfamily. MoaA family. [4Fe-4S] cluster is required as a cofactor.

It catalyses the reaction GTP + AH2 + S-adenosyl-L-methionine = (8S)-3',8-cyclo-7,8-dihydroguanosine 5'-triphosphate + 5'-deoxyadenosine + L-methionine + A + H(+). Its pathway is cofactor biosynthesis; molybdopterin biosynthesis. Catalyzes the cyclization of GTP to (8S)-3',8-cyclo-7,8-dihydroguanosine 5'-triphosphate. The polypeptide is Probable GTP 3',8-cyclase (Methanococcus aeolicus (strain ATCC BAA-1280 / DSM 17508 / OCM 812 / Nankai-3)).